We begin with the raw amino-acid sequence, 49 residues long: Small ribosomal subunit protein eS31 (49 aa).

Zn(2+) contacts are provided by C21, C24, C39, and C42. The segment at 21–42 (CPRCGNGVFLAEHEDRMSCGRC) adopts a C4-type zinc-finger fold.

The protein belongs to the eukaryotic ribosomal protein eS31 family. In terms of assembly, part of the 30S ribosomal subunit. It depends on Zn(2+) as a cofactor.

The sequence is that of Small ribosomal subunit protein eS31 from Methanothrix thermoacetophila (strain DSM 6194 / JCM 14653 / NBRC 101360 / PT) (Methanosaeta thermophila).